The sequence spans 129 residues: Aspartate 1-decarboxylase (129 aa).

S25 acts as the Schiff-base intermediate with substrate; via pyruvic acid in catalysis. A Pyruvic acid (Ser) modification is found at S25. T57 lines the substrate pocket. Residue Y58 is the Proton donor of the active site. A substrate-binding site is contributed by 73–75 (GAA).

It belongs to the PanD family. In terms of assembly, heterooctamer of four alpha and four beta subunits. Pyruvate is required as a cofactor. Is synthesized initially as an inactive proenzyme, which is activated by self-cleavage at a specific serine bond to produce a beta-subunit with a hydroxyl group at its C-terminus and an alpha-subunit with a pyruvoyl group at its N-terminus.

It localises to the cytoplasm. It carries out the reaction L-aspartate + H(+) = beta-alanine + CO2. Its pathway is cofactor biosynthesis; (R)-pantothenate biosynthesis; beta-alanine from L-aspartate: step 1/1. Functionally, catalyzes the pyruvoyl-dependent decarboxylation of aspartate to produce beta-alanine. The polypeptide is Aspartate 1-decarboxylase (Chlorobium chlorochromatii (strain CaD3)).